We begin with the raw amino-acid sequence, 131 residues long: Arsenate reductase 2 (131 aa).

Catalysis depends on nucleophile residues cysteine 10, cysteine 82, and cysteine 89. 2 disulfides stabilise this stretch: cysteine 10/cysteine 82 and cysteine 82/cysteine 89.

The protein belongs to the low molecular weight phosphotyrosine protein phosphatase family. Thioredoxin-coupled ArsC subfamily.

It localises to the cytoplasm. The catalysed reaction is arsenate + [thioredoxin]-dithiol + H(+) = arsenite + [thioredoxin]-disulfide + H2O. Its function is as follows. Catalyzes the reduction of arsenate [As(V)] to arsenite [As(III)]. This chain is Arsenate reductase 2, found in Staphylococcus saprophyticus subsp. saprophyticus (strain ATCC 15305 / DSM 20229 / NCIMB 8711 / NCTC 7292 / S-41).